Reading from the N-terminus, the 327-residue chain is Gonadotropin-releasing hormone receptor (327 aa).

The Extracellular portion of the chain corresponds to 1 to 38 (MANNASLEQDPNHCSAINNSIPLIQGKLPTLTVSGKIR). 2 N-linked (GlcNAc...) asparagine glycosylation sites follow: Asn-4 and Asn-18. The chain crosses the membrane as a helical span at residues 39-58 (VTVTFFLFLLSTAFNASFLL). The Cytoplasmic portion of the chain corresponds to 59 to 77 (KLQKWTQKRKKGKKLSRMK). A helical transmembrane segment spans residues 78-97 (VLLKHLTLANLLETLIVMPL). Residues 98-115 (DGMWNITVQWYAGEFLCK) lie on the Extracellular side of the membrane. Asn-102 carries an N-linked (GlcNAc...) asparagine glycan. An intrachain disulfide couples Cys-114 to Cys-195. Residues 116–137 (VLSYLKLFSMYAPAFMMVVISL) form a helical membrane-spanning segment. Topologically, residues 138–164 (DRSLAITQPLAVQSNSKLEQSMISLAW) are cytoplasmic. A helical transmembrane segment spans residues 165–184 (ILSIVFAGPQLYIFRMIYLA). Over 185 to 211 (DGSGPTVFSQCVTHCSFPQWWHQAFYN) the chain is Extracellular. The chain crosses the membrane as a helical span at residues 212-231 (FFTFGCLFIIPLLIMLICNA). At 232-280 (KIIFALTRVLHQDPRKLQLNQSKNNIPRARLRTLKMTVAFATSFVVCWT) the chain is on the cytoplasmic side. Residues 281–299 (PYYVLGIWYWFDPEMLNRV) form a helical membrane-spanning segment. At 300 to 305 (SEPVNH) the chain is on the extracellular side. A helical transmembrane segment spans residues 306–325 (FFFLFAFLNPCFDPLIYGYF). Over 326–327 (SL) the chain is Cytoplasmic.

Belongs to the G-protein coupled receptor 1 family. Pituitary gland.

Its subcellular location is the cell membrane. In terms of biological role, receptor for gonadotropin releasing hormone (GnRH) that mediates the action of GnRH to stimulate the secretion of the gonadotropic hormones luteinizing hormone (LH) and follicle-stimulating hormone (FSH). This receptor mediates its action by association with G-proteins that activate a phosphatidylinositol-calcium second messenger system. This chain is Gonadotropin-releasing hormone receptor (Gnrhr), found in Mus musculus (Mouse).